The following is a 485-amino-acid chain: UDP-N-acetylmuramoyl-L-alanyl-D-glutamate--2,6-diaminopimelate ligase (485 aa).

Residue Ser-30 coordinates UDP-N-acetyl-alpha-D-muramoyl-L-alanyl-D-glutamate. 111-117 serves as a coordination point for ATP; it reads GTNGKTT. UDP-N-acetyl-alpha-D-muramoyl-L-alanyl-D-glutamate-binding positions include 153–154, Ser-180, Gln-186, and Arg-188; that span reads TT. Lys-220 is modified (N6-carboxylysine). Meso-2,6-diaminopimelate-binding positions include Arg-378, 402-405, Gly-455, and Glu-459; that span reads DNPR. A Meso-diaminopimelate recognition motif motif is present at residues 402 to 405; it reads DNPR.

It belongs to the MurCDEF family. MurE subfamily. It depends on Mg(2+) as a cofactor. In terms of processing, carboxylation is probably crucial for Mg(2+) binding and, consequently, for the gamma-phosphate positioning of ATP.

It localises to the cytoplasm. It catalyses the reaction UDP-N-acetyl-alpha-D-muramoyl-L-alanyl-D-glutamate + meso-2,6-diaminopimelate + ATP = UDP-N-acetyl-alpha-D-muramoyl-L-alanyl-gamma-D-glutamyl-meso-2,6-diaminopimelate + ADP + phosphate + H(+). It participates in cell wall biogenesis; peptidoglycan biosynthesis. Its function is as follows. Catalyzes the addition of meso-diaminopimelic acid to the nucleotide precursor UDP-N-acetylmuramoyl-L-alanyl-D-glutamate (UMAG) in the biosynthesis of bacterial cell-wall peptidoglycan. The sequence is that of UDP-N-acetylmuramoyl-L-alanyl-D-glutamate--2,6-diaminopimelate ligase from Bacteroides fragilis (strain ATCC 25285 / DSM 2151 / CCUG 4856 / JCM 11019 / LMG 10263 / NCTC 9343 / Onslow / VPI 2553 / EN-2).